Reading from the N-terminus, the 198-residue chain is Probable host range protein 2 (198 aa).

A disordered region spans residues 171-198 (SDDDDDNDNADDDEEDDDEVNDIEDDYE).

The protein belongs to the poxviridae C7 protein family.

Its function is as follows. Plays a role for multiplication of the virus in different cell types. This is Probable host range protein 2 from Bos taurus (Bovine).